Consider the following 448-residue polypeptide: Trigger factor (448 aa).

Residues 167–253 (GSIVRVDFVE…VKDIKRRDIP (87 aa)) form the PPIase FKBP-type domain.

The protein belongs to the FKBP-type PPIase family. Tig subfamily.

Its subcellular location is the cytoplasm. The catalysed reaction is [protein]-peptidylproline (omega=180) = [protein]-peptidylproline (omega=0). Its function is as follows. Involved in protein export. Acts as a chaperone by maintaining the newly synthesized protein in an open conformation. Functions as a peptidyl-prolyl cis-trans isomerase. This chain is Trigger factor, found in Borrelia recurrentis (strain A1).